The following is a 218-amino-acid chain: Capsid protein (218 aa).

Met1 carries the N-acetylmethionine; by host modification. Residues Met1–Asp29 are disordered. A compositionally biased stretch (basic residues) spans Arg11–Ser21.

It belongs to the cucumovirus capsid protein family.

The protein localises to the virion. Capsid protein. Probably binds RNA and plays a role in packaging. The polypeptide is Capsid protein (Cucumber mosaic virus (strain C) (CMV)).